Here is a 186-residue protein sequence, read N- to C-terminus: MEKDNLKKILQEKMEKAIKVLGNELKGLRTGRASINFLDSVTVEAYGSKIPLSQVASLSTPDARTINVQVWDKSMVSSVEKGITIANLGLTHATDGQLIRLPIPSLTEERRKELVKLAHKYGEETKISLRNIRRDGIEELKKLEKDNIIVKDEYHNLSEQIQKLTDEYSSKVDSAIKQKEQEIMTV.

This sequence belongs to the RRF family.

Its subcellular location is the cytoplasm. Its function is as follows. Responsible for the release of ribosomes from messenger RNA at the termination of protein biosynthesis. May increase the efficiency of translation by recycling ribosomes from one round of translation to another. This is Ribosome-recycling factor from Rickettsia prowazekii (strain Madrid E).